The chain runs to 406 residues: Vacuole membrane protein 1 (406 aa).

A compositionally biased stretch (basic and acidic residues) spans 1 to 20 (MAENGKNCDQRRVAMNKEQH). A disordered region spans residues 1-36 (MAENGKNCDQRRVAMNKEQHNGNFTDPSSVNEKKRR). N-acetylalanine is present on alanine 2. Topologically, residues 2 to 43 (AENGKNCDQRRVAMNKEQHNGNFTDPSSVNEKKRREREERQN) are cytoplasmic. The segment covering 21-30 (NGNFTDPSSV) has biased composition (polar residues). A helical membrane pass occupies residues 44–64 (IVLWRQPLITLQYFSLEILVI). Residues 65-77 (LKEWTSKLWHRQS) are Extracellular-facing. A helical membrane pass occupies residues 78-98 (IVVSFLLLLAVLIATYYVEGA). Residues 99-109 (HQQYVQRIEKQ) are Cytoplasmic-facing. The chain crosses the membrane as a helical span at residues 110–130 (FLLYAYWIGLGILSSVGLGTG). Topologically, residues 131 to 250 (LHTFLLYLGP…ASRAKLAVQK (120 aa)) are extracellular. The interval 173-316 (GTEGTISLWS…FVIITFSKHI (144 aa)) is VTT domain. Residues 251 to 271 (LVQKVGFFGILACASIPNPLF) form a helical membrane-spanning segment. Topologically, residues 272 to 273 (DL) are cytoplasmic. Residues 274–294 (AGITCGHFLVPFWTFFGATLI) traverse the membrane as a helical segment. Residues 295–305 (GKAIIKMHIQK) are Extracellular-facing. The helical transmembrane segment at 306–326 (IFVIITFSKHIVEQMVAFIGA) threads the bilayer. At 327-363 (VPGIGPSLQKPFQEYLEAQRQKLHHKSEMGTPQGENW) the chain is on the cytoplasmic side. The chain crosses the membrane as a helical span at residues 364-384 (LSWMFEKLVVVMVCYFILSII). Topologically, residues 385-406 (NSMAQSYAKRIQQRLNSEEKTK) are extracellular.

It belongs to the VMP1 family. As to quaternary structure, interacts with BECN1. Interacts with TJP1. Interacts with TP53INP2. Interacts with TMEM41B. Interacts with ATP2A2, PLN and SLN; competes with PLN and SLN to prevent them from forming an inhibitory complex with ATP2A2. Interacts with ATG2A.

Its subcellular location is the endoplasmic reticulum-Golgi intermediate compartment membrane. The protein localises to the cell membrane. It is found in the vacuole membrane. The protein resides in the endoplasmic reticulum membrane. It carries out the reaction a 1,2-diacyl-sn-glycero-3-phospho-L-serine(in) = a 1,2-diacyl-sn-glycero-3-phospho-L-serine(out). The enzyme catalyses cholesterol(in) = cholesterol(out). The catalysed reaction is a 1,2-diacyl-sn-glycero-3-phosphocholine(in) = a 1,2-diacyl-sn-glycero-3-phosphocholine(out). It catalyses the reaction a 1,2-diacyl-sn-glycero-3-phosphoethanolamine(in) = a 1,2-diacyl-sn-glycero-3-phosphoethanolamine(out). In terms of biological role, phospholipid scramblase involved in lipid homeostasis and membrane dynamics processes. Has phospholipid scramblase activity toward cholesterol and phosphatidylserine, as well as phosphatidylethanolamine and phosphatidylcholine. Required for autophagosome formation: participates in early stages of autophagosome biogenesis at the endoplasmic reticulum (ER) membrane by reequilibrating the leaflets of the ER as lipids are extracted by ATG2 (ATG2A or ATG2B) to mediate autophagosome assembly. Regulates ATP2A2 activity to control ER-isolation membrane contacts for autophagosome formation. In addition to autophagy, involved in other processes in which phospholipid scramblase activity is required. Modulates ER contacts with lipid droplets, mitochondria and endosomes. Plays an essential role in formation of cell junctions. Upon stress such as bacterial and viral infection, promotes formation of cytoplasmic vacuoles followed by cell death. Involved in the cytoplasmic vacuolization of acinar cells during the early stage of acute pancreatitis. This chain is Vacuole membrane protein 1, found in Pongo abelii (Sumatran orangutan).